Consider the following 338-residue polypeptide: Holliday junction branch migration complex subunit RuvB (338 aa).

Residues 4 to 187 (ADRLIHAEPQ…FGIPLRLEFY (184 aa)) form a large ATPase domain (RuvB-L) region. ATP is bound by residues Arg27, Gly68, Lys71, Thr72, Thr73, 134 to 136 (EDY), Arg177, Tyr187, and Arg224. Thr72 contacts Mg(2+). Positions 188–258 (NVKDLSSIVT…VAELALDMLD (71 aa)) are small ATPAse domain (RuvB-S). Residues 261-338 (SEGFDYMDRK…RHFDIIQPEK (78 aa)) are head domain (RuvB-H). Positions 297, 316, and 321 each coordinate DNA.

It belongs to the RuvB family. As to quaternary structure, homohexamer. Forms an RuvA(8)-RuvB(12)-Holliday junction (HJ) complex. HJ DNA is sandwiched between 2 RuvA tetramers; dsDNA enters through RuvA and exits via RuvB. An RuvB hexamer assembles on each DNA strand where it exits the tetramer. Each RuvB hexamer is contacted by two RuvA subunits (via domain III) on 2 adjacent RuvB subunits; this complex drives branch migration. In the full resolvosome a probable DNA-RuvA(4)-RuvB(12)-RuvC(2) complex forms which resolves the HJ.

The protein resides in the cytoplasm. It catalyses the reaction ATP + H2O = ADP + phosphate + H(+). The RuvA-RuvB-RuvC complex processes Holliday junction (HJ) DNA during genetic recombination and DNA repair, while the RuvA-RuvB complex plays an important role in the rescue of blocked DNA replication forks via replication fork reversal (RFR). RuvA specifically binds to HJ cruciform DNA, conferring on it an open structure. The RuvB hexamer acts as an ATP-dependent pump, pulling dsDNA into and through the RuvAB complex. RuvB forms 2 homohexamers on either side of HJ DNA bound by 1 or 2 RuvA tetramers; 4 subunits per hexamer contact DNA at a time. Coordinated motions by a converter formed by DNA-disengaged RuvB subunits stimulates ATP hydrolysis and nucleotide exchange. Immobilization of the converter enables RuvB to convert the ATP-contained energy into a lever motion, pulling 2 nucleotides of DNA out of the RuvA tetramer per ATP hydrolyzed, thus driving DNA branch migration. The RuvB motors rotate together with the DNA substrate, which together with the progressing nucleotide cycle form the mechanistic basis for DNA recombination by continuous HJ branch migration. Branch migration allows RuvC to scan DNA until it finds its consensus sequence, where it cleaves and resolves cruciform DNA. This chain is Holliday junction branch migration complex subunit RuvB, found in Shewanella woodyi (strain ATCC 51908 / MS32).